The sequence spans 355 residues: Chemerin-like receptor 2 (355 aa).

At 1-41 the chain is on the extracellular side; it reads MEDLEETLFEEFENYSYALDYYSLESDLEEKVQLGVVHWVS. The N-linked (GlcNAc...) asparagine glycan is linked to Asn14. Residues 42–62 traverse the membrane as a helical segment; the sequence is LVLYCLSFVLGIPGNAIVIWF. At 63 to 73 the chain is on the cytoplasmic side; the sequence is TGFKWKKTVST. Residues 74–94 traverse the membrane as a helical segment; sequence LWFLNLAIADFIFLLFLPLYI. Residues 95 to 112 lie on the Extracellular side of the membrane; that stretch reads SYVVMNFHWPFGIWLCKA. Residues Cys110 and Cys187 are joined by a disulfide bond. Residues 113–133 traverse the membrane as a helical segment; that stretch reads NSFTAQLNMFASVFFLTVISL. Residues 134–154 lie on the Cytoplasmic side of the membrane; the sequence is DHYIHLIHPVLSHRHRTLKNS. The chain crosses the membrane as a helical span at residues 155–175; sequence LIVIIFIWLLASLIGGPALYF. The Extracellular segment spans residues 176-210; it reads RDTVEFNNHTLCYNNFQKHDPDLTVIRHHVLTWVK. A helical transmembrane segment spans residues 211–231; sequence FIVGYLFPLLTMSICYLCLIF. The Cytoplasmic segment spans residues 232–247; it reads KVKKRSILISSRHFWT. Residues 248–268 form a helical membrane-spanning segment; that stretch reads ILAVVVAFVVCWTPYHLFSIW. At 269–286 the chain is on the extracellular side; the sequence is ELTIHHNSYSHHVMQAGI. The chain crosses the membrane as a helical span at residues 287–307; it reads PLSTGLAFLNSCLNPILYVLI. At 308-355 the chain is on the cytoplasmic side; it reads SKKFQARFRSSVAEILKYTLWEVSCSGTVSEQLRNSETKNLCLLETAQ.

The protein belongs to the chemokine-like receptor (CMKLR) family.

Its subcellular location is the cell membrane. Functionally, receptor for chemoattractant adipokine chemerin/RARRES2 suggesting a role for this receptor in the regulation of inflammation and energy homesotasis. Signals mainly via beta-arrestin pathway. Binding of RARRES2 activates weakly G proteins, calcium mobilization and MAPK1/MAPK3 (ERK1/2) phosphorylation too. Acts also as a receptor for TAFA1, mediates its effects on neuronal stem-cell proliferation and differentiation via the activation of ROCK/ERK and ROCK/STAT3 signaling pathway. This Macaca mulatta (Rhesus macaque) protein is Chemerin-like receptor 2 (CMKLR2).